The primary structure comprises 183 residues: Peptide deformylase (183 aa).

Fe cation-binding residues include C110 and H153. E154 is an active-site residue. H157 contributes to the Fe cation binding site.

It belongs to the polypeptide deformylase family. It depends on Fe(2+) as a cofactor.

The catalysed reaction is N-terminal N-formyl-L-methionyl-[peptide] + H2O = N-terminal L-methionyl-[peptide] + formate. Its function is as follows. Removes the formyl group from the N-terminal Met of newly synthesized proteins. Requires at least a dipeptide for an efficient rate of reaction. N-terminal L-methionine is a prerequisite for activity but the enzyme has broad specificity at other positions. The polypeptide is Peptide deformylase (Oceanobacillus iheyensis (strain DSM 14371 / CIP 107618 / JCM 11309 / KCTC 3954 / HTE831)).